The primary structure comprises 147 residues: MITRMQIRIQRTHPQAILPTYAHGPAEDAGMDLHAVEDVTLEPGVARLVSTGLTLEVPPGFEAQVRPRSGLALKHAITIPNAPGTIDPGYRGEVRVIMLNLGRDAYTVHAGDRIAQMIVTRYEAVEWLEGSLADSTRGAGGFGSSGR.

Residues R68 to G70, N81, and T85 to D87 contribute to the substrate site.

The protein belongs to the dUTPase family. Mg(2+) is required as a cofactor.

It catalyses the reaction dUTP + H2O = dUMP + diphosphate + H(+). It participates in pyrimidine metabolism; dUMP biosynthesis; dUMP from dCTP (dUTP route): step 2/2. Functionally, this enzyme is involved in nucleotide metabolism: it produces dUMP, the immediate precursor of thymidine nucleotides and it decreases the intracellular concentration of dUTP so that uracil cannot be incorporated into DNA. This chain is Deoxyuridine 5'-triphosphate nucleotidohydrolase, found in Solibacter usitatus (strain Ellin6076).